Here is a 363-residue protein sequence, read N- to C-terminus: MAP kinase kinase mkk-4 (363 aa).

The segment at 1–38 is disordered; the sequence is MVQEDDENLRNSMSLRPTSLSTRPTSLSVNGNEKTLPE. The segment covering 14–28 has biased composition (low complexity); the sequence is SLRPTSLSTRPTSLS. The Protein kinase domain occupies 66 to 330; that stretch reads LQDLGAIGNG…YDTLKSFDFY (265 aa). ATP contacts are provided by residues 72–80 and lysine 95; that span reads IGNGNFGTV. The Proton acceptor role is filled by aspartate 194.

The protein belongs to the protein kinase superfamily. STE Ser/Thr protein kinase family. MAP kinase kinase subfamily. As to expression, expressed in the pharynx, including the corpus, isthmus and terminal bulb.

The protein localises to the cytoplasm. The enzyme catalyses L-seryl-[protein] + ATP = O-phospho-L-seryl-[protein] + ADP + H(+). The catalysed reaction is L-threonyl-[protein] + ATP = O-phospho-L-threonyl-[protein] + ADP + H(+). It carries out the reaction L-tyrosyl-[protein] + ATP = O-phospho-L-tyrosyl-[protein] + ADP + H(+). Functionally, activity is required in presynaptic neurons, in a dose-dependent manner, for normal presynaptic development and morphology. Plays a role in the formation of muscle connections, also called muscle arm extensions, between the body wall and the motor axons in the dorsal and ventral cord. The protein is MAP kinase kinase mkk-4 (mkk-4) of Caenorhabditis elegans.